Reading from the N-terminus, the 153-residue chain is Small ribosomal subunit protein eS19 (153 aa).

Belongs to the eukaryotic ribosomal protein eS19 family. In terms of assembly, part of the 30S ribosomal subunit.

Its function is as follows. May be involved in maturation of the 30S ribosomal subunit. The protein is Small ribosomal subunit protein eS19 of Aeropyrum pernix (strain ATCC 700893 / DSM 11879 / JCM 9820 / NBRC 100138 / K1).